Reading from the N-terminus, the 133-residue chain is Phosphoribosyl-AMP cyclohydrolase (133 aa).

A Mg(2+)-binding site is contributed by Asp82. Residue Cys83 participates in Zn(2+) binding. Mg(2+) contacts are provided by Asp84 and Asp86. Zn(2+)-binding residues include Cys100 and Cys107.

The protein belongs to the PRA-CH family. Homodimer. Mg(2+) is required as a cofactor. Zn(2+) serves as cofactor.

The protein resides in the cytoplasm. The catalysed reaction is 1-(5-phospho-beta-D-ribosyl)-5'-AMP + H2O = 1-(5-phospho-beta-D-ribosyl)-5-[(5-phospho-beta-D-ribosylamino)methylideneamino]imidazole-4-carboxamide. Its pathway is amino-acid biosynthesis; L-histidine biosynthesis; L-histidine from 5-phospho-alpha-D-ribose 1-diphosphate: step 3/9. In terms of biological role, catalyzes the hydrolysis of the adenine ring of phosphoribosyl-AMP. The protein is Phosphoribosyl-AMP cyclohydrolase of Aromatoleum aromaticum (strain DSM 19018 / LMG 30748 / EbN1) (Azoarcus sp. (strain EbN1)).